The chain runs to 159 residues: Phosphopantetheine adenylyltransferase (159 aa).

Ser-9 is a substrate binding site. ATP is bound by residues 9 to 10 and His-17; that span reads SF. Residues Lys-41, Leu-73, and Lys-87 each coordinate substrate. ATP is bound by residues 88 to 90, Glu-98, and 123 to 129; these read GLR and YSYLSSS.

Belongs to the bacterial CoaD family. As to quaternary structure, homohexamer. It depends on Mg(2+) as a cofactor.

It is found in the cytoplasm. It catalyses the reaction (R)-4'-phosphopantetheine + ATP + H(+) = 3'-dephospho-CoA + diphosphate. It participates in cofactor biosynthesis; coenzyme A biosynthesis; CoA from (R)-pantothenate: step 4/5. Reversibly transfers an adenylyl group from ATP to 4'-phosphopantetheine, yielding dephospho-CoA (dPCoA) and pyrophosphate. The chain is Phosphopantetheine adenylyltransferase from Clostridium botulinum (strain Alaska E43 / Type E3).